A 183-amino-acid polypeptide reads, in one-letter code: Endoribonuclease YbeY (183 aa).

3 residues coordinate Zn(2+): H143, H147, and H153.

It belongs to the endoribonuclease YbeY family. It depends on Zn(2+) as a cofactor.

The protein resides in the cytoplasm. Functionally, single strand-specific metallo-endoribonuclease involved in late-stage 70S ribosome quality control and in maturation of the 3' terminus of the 16S rRNA. The protein is Endoribonuclease YbeY of Rickettsia bellii (strain OSU 85-389).